A 447-amino-acid polypeptide reads, in one-letter code: Tubulin beta chain (447 aa).

Q11, E69, S138, G142, T143, G144, N204, and N226 together coordinate GTP. Residue E69 coordinates Mg(2+). The interval 425–447 (YQEASISEGEEEYDEEAPLEAEE) is disordered. The span at 432–447 (EGEEEYDEEAPLEAEE) shows a compositional bias: acidic residues.

Belongs to the tubulin family. In terms of assembly, dimer of alpha and beta chains. A typical microtubule is a hollow water-filled tube with an outer diameter of 25 nm and an inner diameter of 15 nM. Alpha-beta heterodimers associate head-to-tail to form protofilaments running lengthwise along the microtubule wall with the beta-tubulin subunit facing the microtubule plus end conferring a structural polarity. Microtubules usually have 13 protofilaments but different protofilament numbers can be found in some organisms and specialized cells. Mg(2+) is required as a cofactor.

The protein localises to the cytoplasm. Its subcellular location is the cytoskeleton. Its function is as follows. Tubulin is the major constituent of microtubules, a cylinder consisting of laterally associated linear protofilaments composed of alpha- and beta-tubulin heterodimers. Microtubules grow by the addition of GTP-tubulin dimers to the microtubule end, where a stabilizing cap forms. Below the cap, tubulin dimers are in GDP-bound state, owing to GTPase activity of alpha-tubulin. This is Tubulin beta chain (tubB) from Phaeosphaeria nodorum (strain SN15 / ATCC MYA-4574 / FGSC 10173) (Glume blotch fungus).